The following is an 83-amino-acid chain: Putative snRNP Sm-like protein (83 aa).

One can recognise a Sm domain in the interval 9–81 (KPMDVLKSAL…VIFVSPSKGD (73 aa)).

The protein belongs to the snRNP Sm proteins family.

The chain is Putative snRNP Sm-like protein from Thermoplasma acidophilum (strain ATCC 25905 / DSM 1728 / JCM 9062 / NBRC 15155 / AMRC-C165).